Reading from the N-terminus, the 210-residue chain is MARRSQGTKLHLAVLCLVVSCHAIGLSDLMERASQRSDKLHSLSTSLNKDLDSHFPPMGRVMMPRPSMCHTSSLQIPKDKEQALRVSENELISLARSLLLAWNDPLLLLSSEAPTLPHPSNGDISSKIRELQDYSKSLGDGLDILVNKMGPSSQYISSIPFKGGDLGNDKTSRLINFHFLMSCFRRDSHKIDSFLKVLRCRATKMRPETC.

The first 23 residues, 1–23 (MARRSQGTKLHLAVLCLVVSCHA), serve as a signal peptide directing secretion. 2 disulfides stabilise this stretch: Cys69/Cys183 and Cys200/Cys210.

Belongs to the somatotropin/prolactin family.

The protein resides in the secreted. This Oncorhynchus keta (Chum salmon) protein is Prolactin-2 (prl2).